Reading from the N-terminus, the 286-residue chain is ATP phosphoribosyltransferase (286 aa).

Belongs to the ATP phosphoribosyltransferase family. Long subfamily. The cofactor is Mg(2+).

It is found in the cytoplasm. The catalysed reaction is 1-(5-phospho-beta-D-ribosyl)-ATP + diphosphate = 5-phospho-alpha-D-ribose 1-diphosphate + ATP. The protein operates within amino-acid biosynthesis; L-histidine biosynthesis; L-histidine from 5-phospho-alpha-D-ribose 1-diphosphate: step 1/9. With respect to regulation, feedback inhibited by histidine. Its function is as follows. Catalyzes the condensation of ATP and 5-phosphoribose 1-diphosphate to form N'-(5'-phosphoribosyl)-ATP (PR-ATP). Has a crucial role in the pathway because the rate of histidine biosynthesis seems to be controlled primarily by regulation of HisG enzymatic activity. This Arthrobacter sp. (strain FB24) protein is ATP phosphoribosyltransferase.